Reading from the N-terminus, the 274-residue chain is Ribosomal RNA small subunit methyltransferase A (274 aa).

S-adenosyl-L-methionine-binding residues include His15, Leu17, Gly42, Glu64, Asp89, and Asn109.

This sequence belongs to the class I-like SAM-binding methyltransferase superfamily. rRNA adenine N(6)-methyltransferase family. RsmA subfamily.

It is found in the cytoplasm. It carries out the reaction adenosine(1518)/adenosine(1519) in 16S rRNA + 4 S-adenosyl-L-methionine = N(6)-dimethyladenosine(1518)/N(6)-dimethyladenosine(1519) in 16S rRNA + 4 S-adenosyl-L-homocysteine + 4 H(+). Functionally, specifically dimethylates two adjacent adenosines (A1518 and A1519) in the loop of a conserved hairpin near the 3'-end of 16S rRNA in the 30S particle. May play a critical role in biogenesis of 30S subunits. This Synechococcus sp. (strain CC9902) protein is Ribosomal RNA small subunit methyltransferase A.